The sequence spans 790 residues: von Willebrand factor A domain-containing protein 2 (790 aa).

Positions 1–22 are cleaved as a signal peptide; that stretch reads MRLPWVNGILAFLSSQVLQCLC. The 172-residue stretch at 50–221 folds into the VWFA 1 domain; it reads DILILLDGSN…DAVNGLATSL (172 aa). The 38-residue stretch at 295–332 folds into the EGF-like 1 domain; sequence PDPCDSQPCKNGGTCIAEGQDKYHCVCPAGFGGDTECA. 3 disulfides stabilise this stretch: cysteine 298–cysteine 309, cysteine 303–cysteine 319, and cysteine 321–cysteine 331. 2 VWFA domains span residues 342-518 and 532-702; these read DLLF…QKRI and DLAF…EDSV. Positions 713-748 constitute an EGF-like 2 domain; sequence PVNLCKPNPCMNDGVCILRQGSYRCDCRGWDGPHCE. Cystine bridges form between cysteine 717–cysteine 728, cysteine 722–cysteine 737, and cysteine 739–cysteine 747. The interval 758–790 is disordered; sequence WPQGLHSRSRQQRHSRKRRLKSVSGSRSSRKKP. The segment covering 764 to 778 has biased composition (basic residues); that stretch reads SRSRQQRHSRKRRLK.

In terms of assembly, forms monomers and multimers.

It localises to the secreted. In Xenopus laevis (African clawed frog), this protein is von Willebrand factor A domain-containing protein 2 (vwa2).